Reading from the N-terminus, the 484-residue chain is L-aspartate oxidase (484 aa).

FAD-binding positions include 11-14, Lys-33, 40-47, and Asp-203; these read SGIS and NSMLAQGG. The active-site Proton donor/acceptor is the Arg-270. FAD contacts are provided by residues Glu-352 and 368 to 369; that span reads SL.

The protein belongs to the FAD-dependent oxidoreductase 2 family. NadB subfamily. FAD serves as cofactor.

It is found in the cytoplasm. It catalyses the reaction L-aspartate + O2 = iminosuccinate + H2O2. The protein operates within cofactor biosynthesis; NAD(+) biosynthesis; iminoaspartate from L-aspartate (oxidase route): step 1/1. In terms of biological role, catalyzes the oxidation of L-aspartate to iminoaspartate, the first step in the de novo biosynthesis of NAD(+). The protein is L-aspartate oxidase (nadB) of Listeria monocytogenes serovar 1/2a (strain ATCC BAA-679 / EGD-e).